The chain runs to 255 residues: MSMSEEEKMVLQQKIRDRTPKLPISKVKRIGKVDPESILTSNMAYVATAFATELFVQSFVEQALFGAQLRRGKKKAGLRLTNDALVECVRNRDDYIFLEDVVRHIEKPKTSSGLHKLSAKPVGQGQEAEQKDASMEEDIPEEDLQEDDEMDVDETEPAERPAASKASDVNKASASAKSILSAFKYAPESAPQIHGSTQTEEDEGDEKEEDEDEEEEIDPEVQTQLQEVEKMNVVADLDEESEVSSDEDEASADDG.

The interval 109–255 is disordered; it reads KTSSGLHKLS…DEDEASADDG (147 aa). Acidic residues predominate over residues 135 to 156; the sequence is MEEDIPEEDLQEDDEMDVDETE. Over residues 171-184 the composition is skewed to low complexity; that stretch reads KASASAKSILSAFK. Acidic residues-rich tracts occupy residues 199 to 219 and 236 to 255; these read TEEDEGDEKEEDEDEEEEIDP and DLDEESEVSSDEDEASADDG.

Heterotetramer. Consists of four subunits: POL2, DPB2, DPB3 and DPB4.

It is found in the nucleus. Its function is as follows. As accessory component of the DNA polymerase epsilon (DNA polymerase II) participates in chromosomal DNA replication. This Candida glabrata (strain ATCC 2001 / BCRC 20586 / JCM 3761 / NBRC 0622 / NRRL Y-65 / CBS 138) (Yeast) protein is DNA polymerase epsilon subunit C (DPB3).